The chain runs to 180 residues: MSFFTLMALAVALGTDALSLSVGIGLTGISRRRILQISATVLLFHIFMPLTGWLVGEFTGSLIGRAAAVIGSLLLVGLGVKMIWAAWRNGGETEPSLVRFNFWGLLLLGASVSMDALSAGFTLGTRQVNLLLAAGVIGLVAGAMTAGGLVFGRFLGSRVGERAQLLGGLILVGIGIKLFF.

The next 6 membrane-spanning stretches (helical) occupy residues 6-26 (LMAL…GIGL), 34-54 (ILQI…TGWL), 67-87 (AAVI…WAAW), 102-122 (FWGL…AGFT), 131-151 (LLAA…GLVF), and 160-180 (GERA…KLFF).

It belongs to the MntP (TC 9.B.29) family.

The protein resides in the cell membrane. In terms of biological role, probably functions as a manganese efflux pump. The protein is Putative manganese efflux pump MntP of Pelotomaculum thermopropionicum (strain DSM 13744 / JCM 10971 / SI).